The chain runs to 565 residues: NAD-dependent malic enzyme (565 aa).

Y104 functions as the Proton donor in the catalytic mechanism. R157 is an NAD(+) binding site. K175 (proton acceptor) is an active-site residue. 3 residues coordinate a divalent metal cation: E246, D247, and D270. Residues D270 and N418 each coordinate NAD(+).

This sequence belongs to the malic enzymes family. As to quaternary structure, homotetramer. It depends on Mg(2+) as a cofactor. Mn(2+) is required as a cofactor.

It carries out the reaction (S)-malate + NAD(+) = pyruvate + CO2 + NADH. The catalysed reaction is oxaloacetate + H(+) = pyruvate + CO2. The chain is NAD-dependent malic enzyme from Klebsiella pneumoniae subsp. pneumoniae (strain ATCC 700721 / MGH 78578).